Consider the following 675-residue polypeptide: DNA ligase (675 aa).

Residues 36 to 40 (DAVYD), 85 to 86 (SL), and glutamate 118 contribute to the NAD(+) site. The active-site N6-AMP-lysine intermediate is the lysine 120. Residues arginine 141, glutamate 178, lysine 298, and lysine 322 each coordinate NAD(+). Zn(2+)-binding residues include cysteine 416, cysteine 419, cysteine 434, and cysteine 439. Residues 598 to 675 (TQPQTLSGKT…SEADLLALLQ (78 aa)) enclose the BRCT domain.

This sequence belongs to the NAD-dependent DNA ligase family. LigA subfamily. Requires Mg(2+) as cofactor. It depends on Mn(2+) as a cofactor.

The catalysed reaction is NAD(+) + (deoxyribonucleotide)n-3'-hydroxyl + 5'-phospho-(deoxyribonucleotide)m = (deoxyribonucleotide)n+m + AMP + beta-nicotinamide D-nucleotide.. In terms of biological role, DNA ligase that catalyzes the formation of phosphodiester linkages between 5'-phosphoryl and 3'-hydroxyl groups in double-stranded DNA using NAD as a coenzyme and as the energy source for the reaction. It is essential for DNA replication and repair of damaged DNA. The protein is DNA ligase of Acaryochloris marina (strain MBIC 11017).